The primary structure comprises 41 residues: Histone H2B.3, sperm (41 aa).

Residues 1–41 are disordered; the sequence is MPRSPSKSSPKKGSPRKASPKRGGKGAKRAGKGGRRRTVVK. Short sequence motifs (SPKK motif) lie at residues 4–7, 9–12, 14–17, and 19–22; these read SPSK, SPKK, SPRK, and SPKR. The segment covering 9 to 41 has biased composition (basic residues); that stretch reads SPKKGSPRKASPKRGGKGAKRAGKGGRRRTVVK. Phosphoserine occurs at positions 14 and 19.

It belongs to the histone H2B family. In terms of assembly, the nucleosome is a histone octamer containing two molecules each of H2A, H2B, H3 and H4 assembled in one H3-H4 heterotetramer and two H2A-H2B heterodimers. The octamer wraps approximately 147 bp of DNA. Post-translationally, monoubiquitination gives a specific tag for epigenetic transcriptional activation and is also prerequisite for histone H3 'Lys-4' and 'Lys-79' methylation. In terms of processing, phosphorylated on SPKK motifs 3 and 4; which may regulate DNA binding. Dephosphorylated during maturation of spermatids to mature sperm and rephosphorylated at fertilization.

The protein localises to the nucleus. It is found in the chromosome. Core component of nucleosome. Nucleosomes wrap and compact DNA into chromatin, limiting DNA accessibility to the cellular machineries which require DNA as a template. Histones thereby play a central role in transcription regulation, DNA repair, DNA replication and chromosomal stability. DNA accessibility is regulated via a complex set of post-translational modifications of histones, also called histone code, and nucleosome remodeling. The polypeptide is Histone H2B.3, sperm (Echinus esculentus (Sea urchin)).